The sequence spans 217 residues: Cytidylate kinase (217 aa).

10–18 serves as a coordination point for ATP; the sequence is GPAGAGKST.

It belongs to the cytidylate kinase family. Type 1 subfamily.

The protein resides in the cytoplasm. The catalysed reaction is CMP + ATP = CDP + ADP. The enzyme catalyses dCMP + ATP = dCDP + ADP. The polypeptide is Cytidylate kinase (Alkaliphilus oremlandii (strain OhILAs) (Clostridium oremlandii (strain OhILAs))).